The following is a 269-amino-acid chain: MDILLLLKAFILGIIEGATEFLPISSTGHLIIVGDLLDFNDDKGKVFEIVIQLGAILAVCWEYRSRLISVATTLHTNTSQRFILNLFVAFLPAAIFGLLLHGFIKEHLFSSITVACALIVGGFAILLVENLYAHDKAPAAKASNLNEITPWQALKVGCAQSLAIMPGVSRSGATILGGMIFGLNRKTATEFSFFLAIPVMLAATFYDVYKNFSLFVFEDLAMFAVGFITAFLAALVAIKTLIRYVANHDFKGFAYYRIVLGIIVLAYYW.

6 helical membrane passes run 43–63 (KGKV…CWEY), 82–102 (FILN…LLHG), 108–128 (LFSS…ILLV), 188–208 (ATEF…FYDV), 222–242 (MFAV…KTLI), and 249–269 (DFKG…AYYW).

Belongs to the UppP family.

It localises to the cell inner membrane. It catalyses the reaction di-trans,octa-cis-undecaprenyl diphosphate + H2O = di-trans,octa-cis-undecaprenyl phosphate + phosphate + H(+). Its function is as follows. Catalyzes the dephosphorylation of undecaprenyl diphosphate (UPP). Confers resistance to bacitracin. In Methylobacillus flagellatus (strain ATCC 51484 / DSM 6875 / VKM B-1610 / KT), this protein is Undecaprenyl-diphosphatase.